Consider the following 381-residue polypeptide: Sulfate/thiosulfate import ATP-binding protein CysA (381 aa).

The region spanning 3-233 (ILVYEVSKSL…PIDYFVGIFS (231 aa)) is the ABC transporter domain. Residue 35-42 (GPSGSGKS) participates in ATP binding.

The protein belongs to the ABC transporter superfamily. Sulfate/tungstate importer (TC 3.A.1.6) family.

It is found in the plastid. The protein resides in the chloroplast. It carries out the reaction sulfate(out) + ATP + H2O = sulfate(in) + ADP + phosphate + H(+). It catalyses the reaction thiosulfate(out) + ATP + H2O = thiosulfate(in) + ADP + phosphate + H(+). Functionally, part of the ABC transporter complex involved in sulfate/thiosulfate import. Responsible for energy coupling to the transport system. The sequence is that of Sulfate/thiosulfate import ATP-binding protein CysA from Anthoceros angustus (Hornwort).